Reading from the N-terminus, the 142-residue chain is Large ribosomal subunit protein uL13 (142 aa).

The protein belongs to the universal ribosomal protein uL13 family. In terms of assembly, part of the 50S ribosomal subunit.

This protein is one of the early assembly proteins of the 50S ribosomal subunit, although it is not seen to bind rRNA by itself. It is important during the early stages of 50S assembly. The polypeptide is Large ribosomal subunit protein uL13 (Vibrio parahaemolyticus serotype O3:K6 (strain RIMD 2210633)).